The following is an 84-amino-acid chain: UPF0386 protein Oant_1614 (84 aa).

This sequence belongs to the UPF0386 family.

In Brucella anthropi (strain ATCC 49188 / DSM 6882 / CCUG 24695 / JCM 21032 / LMG 3331 / NBRC 15819 / NCTC 12168 / Alc 37) (Ochrobactrum anthropi), this protein is UPF0386 protein Oant_1614.